Here is a 359-residue protein sequence, read N- to C-terminus: MNIYDQLQAVEDRYEELGELLSDPDVVSDTKRFMELSKEEASNRDTVIAYREYKQVLQNIVDAEEMIKESGGDADLEEMAKQELKDAKAEKEEYEEKLKILLLPKDPNDDKNIILEIRGAAGGDEAALFAGDLLTMYQKYAEAQGWRFEVMEASMNGVGGFKEVVAMVSGQSVYSKLKYESGAHRVQRVPVTESQGRVHTSTATVLVMPEVEEVEYDIDPKDLRVDIYHASGAGGQNVNKVATAVRIVHLPTNIKVEMQEERTQQKNREKAMKIIRARVADHFAQIAQDEQDAERKSTIGTGDRSERIRTYNFPQNRVTDHRIGLTLQKLDTILSGKLDEVVDALVLYDQTQKLEELNK.

Gln236 is modified (N5-methylglutamine).

Belongs to the prokaryotic/mitochondrial release factor family. In terms of processing, methylated by PrmC. Methylation increases the termination efficiency of RF1.

It localises to the cytoplasm. Functionally, peptide chain release factor 1 directs the termination of translation in response to the peptide chain termination codons UAG and UAA. This is Peptide chain release factor 1 from Streptococcus pneumoniae serotype 2 (strain D39 / NCTC 7466).